The primary structure comprises 263 residues: Aquaporin-8 (263 aa).

Residues 1–38 lie on the Cytoplasmic side of the membrane; the sequence is MSGEQTPMCSMDLREIKGKETNMADSYHGMSWYEQYIQ. The chain crosses the membrane as a helical span at residues 39–59; the sequence is PCVVELLGSALFIFIGCLSVI. Cysteine 55 is modified (cysteine persulfide). The residue at position 55 (cysteine 55) is a Cysteine sulfenic acid (-SOH). The Extracellular portion of the chain corresponds to 60-86; it reads ENSPNTGLLQPALAHGLALGLIIATLG. A helical transmembrane segment spans residues 87 to 107; that stretch reads NISGGHFNPAVSLAVTLVGGL. The NPA 1 motif lies at 94–96; sequence NPA. Topologically, residues 108–109 are cytoplasmic; the sequence is KT. Residues 110–130 traverse the membrane as a helical segment; sequence MLLIPYWVSQLFGGMIGAALA. Residues 131–158 are Extracellular-facing; it reads KVVSPEERFWNASGAAFAIVQEQEQVAE. An N-linked (GlcNAc...) asparagine glycan is attached at asparagine 141. Residues 159–179 form a helical membrane-spanning segment; sequence ALGVEIVMTMLLVLAVCMGAV. Residues 180 to 185 are Cytoplasmic-facing; it reads NEKTMG. A helical transmembrane segment spans residues 186–206; sequence PLAPFSIGFSVIVDILAGGGI. The Extracellular segment spans residues 207–230; the sequence is SGACMNPARAFGPAVMAGYWDFHW. Residues 212–214 carry the NPA 2 motif; the sequence is NPA. A helical transmembrane segment spans residues 231–251; the sequence is IYWLGPLLAGLFVGLLIRLFI. Topologically, residues 252 to 263 are cytoplasmic; the sequence is GDEKTRLILKSR.

Belongs to the MIP/aquaporin (TC 1.A.8) family. In terms of processing, N-glycosylated. Post-translationally, sulfenylation at Cys-55(C55-SOH) when hydrogen peroxide flows through the AQP8 channel, making it susceptible to hydrogen sulfide produced by CBS. Persulfidation at Cys-55 is required to gate AQP8 channel; under stress condition, hydrogen peroxide accumulates in the cell leading to CBS activation that produces hydrogen sulfide inducing persulfidation of oxidized Cys-55 (C55-SOH). In terms of tissue distribution, highly expressed in sperm, pancreas and liver. Expressed in hepatocytes, acinal cells of pancreas and salivary gland, and absorptive colonic epithelial cells. Expressed in the myoepithelium of submandibular and parotid glands. Expressed in pancreatic beta-cells. Expressed in testis but not in epididymis. Expressed in small intestine.

It localises to the cell membrane. The protein localises to the mitochondrion inner membrane. The protein resides in the apical cell membrane. It is found in the basolateral cell membrane. Its subcellular location is the smooth endoplasmic reticulum membrane. It catalyses the reaction H2O(in) = H2O(out). It carries out the reaction NH4(+)(in) = NH4(+)(out). The catalysed reaction is H2O2(out) = H2O2(in). The enzyme catalyses formamide(out) = formamide(in). It catalyses the reaction methylamine(out) = methylamine(in). With respect to regulation, reversibly gated by a two-step sulfenylation-persulfidation process in cells undergoing diverse stresses. In terms of biological role, channel that allows the facilitated permeation of water and uncharged molecules, such as hydrogen peroxide and the neutral form of ammonia (NH3), through cellular membranes such as plasma membrane, inner mitochondrial membrane and endoplasmic reticulum membrane of several tissues. The transport of ammonia neutral form induces a parallel transport of proton, at alkaline pH when the concentration of ammonia is high. However, it is unclear whether the transport of proton takes place via the aquaporin or via an endogenous pathway. Also, may transport ammonia analogs such as formamide and methylamine, a transport favourited at basic pH due to the increase of unprotonated (neutral) form, which is expected to favor diffusion. Does not transport urea or glycerol. The water transport mechanism is mercury- and copper-sensitive and passive in response to osmotic driving forces. At the canicular plasma membrane, mediates the osmotic transport of water toward the bile canaliculus and facilitates the cAMP-induced bile canalicular water secretion, a process involved in bile formation. In addition, mediates the hydrogen peroxide release from hepatocyte mitochondria that modulates the SREBF2-mediated cholesterol synthesis and facilitates the mitochondrial ammonia uptake which is metabolized into urea, mainly under glucagon stimulation. In B cells, transports the CYBB-generated hydrogen peroxide from the external leaflet of the plasma membrane to the cytosol to promote B cell activation and differentiation for signal amplification. In the small intestine and colon system, mediates water transport through mitochondria and apical membrane of epithelial cells. May play an important role in the adaptive response of proximal tubule cells to acidosis possibly facilitating mitochondrial ammonia transport. This Rattus norvegicus (Rat) protein is Aquaporin-8.